A 77-amino-acid chain; its full sequence is uncharacterized protein (77 aa).

This is an uncharacterized protein from Treponema pallidum (strain Nichols).